The chain runs to 378 residues: Probable cytochrome oxidase subunit 2 (378 aa).

Residues 1 to 8 (MIDYEFLR) lie on the Cytoplasmic side of the membrane. Residues 9–28 (FIWWVLVIVLLIGFSVTDGF) form a helical membrane-spanning segment. At 29-79 (DMGVTALLPVIGKKEVERRIMINTIAPHWDGNQVWLLTAGGAIFAAWPIVY) the chain is on the periplasmic side. Residues 80 to 99 (AVSFSGFYIALVLVLAALFL) traverse the membrane as a helical segment. Residues 100 to 122 (RPLGFEYRAKIDNPTWRSVWDWG) are Cytoplasmic-facing. The helical transmembrane segment at 123 to 142 (LFAGGFVPALVFGVAFGNLL) threads the bilayer. The Periplasmic portion of the chain corresponds to 143-164 (QGVPFHFNELTQVTYTGSFFEL). The helical transmembrane segment at 165–184 (LNPFALLCGVISLSMLVTHG) threads the bilayer. Residues 185–205 (ANWLQMKTTEALRDRARTVSQ) are Cytoplasmic-facing. The chain crosses the membrane as a helical span at residues 206-224 (IGSIVTLIAFVLAGVWLYS). At 225–261 (KDGYVVTSTIDHFAPSSPMNKEVAVETGAWFRNFNEM) the chain is on the periplasmic side. A helical transmembrane segment spans residues 262 to 281 (PILWIFPALAVVAALLNAAF). Topologically, residues 282-291 (SKANRCGFAF) are cytoplasmic. The helical transmembrane segment at 292 to 311 (FFSALTMAGVIITAAVSMFP) threads the bilayer. At 312–335 (FVMPSSSHPEQSLLMWDSTSSELT) the chain is on the periplasmic side. The helical transmembrane segment at 336-355 (LTLMLIFAVVFVVIALAYTI) threads the bilayer. At 356-378 (WSYSKMFGRLDANFIDKNKHSLY) the chain is on the cytoplasmic side.

It belongs to the cytochrome ubiquinol oxidase subunit 2 family. Heterodimer of subunits I and II.

Its subcellular location is the cell inner membrane. Its function is as follows. Probable cytochrome oxidase subunit. In Haemophilus influenzae (strain ATCC 51907 / DSM 11121 / KW20 / Rd), this protein is Probable cytochrome oxidase subunit 2.